A 763-amino-acid chain; its full sequence is Sphingoid long-chain bases kinase 1 (763 aa).

Positions T34–G81 are disordered. Over residues R58 to G81 the composition is skewed to basic and acidic residues. Positions K245–H384 constitute a DAGKc domain. Residues N255–R257 and T287 contribute to the ATP site. G313–G316 is a binding site for substrate. D315 serves as the catalytic Proton donor/acceptor. Residues E320, G345–D347, and R418 each bind ATP. Positions M561–W603 are disordered. D733–E735 contacts ATP.

As to expression, expressed in roots, stems, leaves and at higher levels in flowers.

Involved in the production of sphingolipid metabolites. Active on sphingosine, phytosphingosine (PHS, 4-hydroxysphinganine), D-erythro-dihydrosphingosine, D-erythro-sphingosine and trans-4, trans-8-sphingadienine, an LCB found exclusively in plants, but not on N-acetyl-dihydrosphingosine (C2-dihydroceramide) and D-threo-dihydrosphingosine. This Arabidopsis thaliana (Mouse-ear cress) protein is Sphingoid long-chain bases kinase 1 (LCBK1).